Here is a 206-residue protein sequence, read N- to C-terminus: Inner membrane protein YnjF (206 aa).

The Periplasmic portion of the chain corresponds to 1–37 (MLDRHLHPRIKPLLHQCVRVLDKPGITPDGLTLVGFA). Residues 38 to 60 (IGVLALPFLALGWYLAALVVILL) traverse the membrane as a helical segment. Topologically, residues 61-79 (NRLLDGLDGALARRRELTD) are cytoplasmic. A helical membrane pass occupies residues 80–102 (AGGFLDISLDFLFYALVPFGFIL). At 103–111 (AAPEQNALA) the chain is on the periplasmic side. A helical membrane pass occupies residues 112–134 (GGWLLFAFIGTGSSFLAFAALAA). Topologically, residues 135-146 (KHQIDNPGYAHK) are cytoplasmic. A helical transmembrane segment spans residues 147-169 (SFYYLGGLTEGTETILLFVLGCL). Residues 170–173 (FPAW) are Periplasmic-facing. The helical transmembrane segment at 174-196 (FAWFAWIFGALCWMTTFTRVWSG) threads the bilayer. Topologically, residues 197-206 (YLTLKSLQRQ) are cytoplasmic.

It belongs to the CDP-alcohol phosphatidyltransferase class-I family.

It localises to the cell inner membrane. In Escherichia coli (strain K12), this protein is Inner membrane protein YnjF (ynjF).